Here is a 348-residue protein sequence, read N- to C-terminus: sn-glycerol-3-phosphate import ATP-binding protein UgpC 3 (348 aa).

The ABC transporter domain maps to 4-234; sequence INIVDVKKNY…PASLFVAGFI (231 aa). 36–43 is a binding site for ATP; sequence GPSGCGKS.

It belongs to the ABC transporter superfamily. sn-glycerol-3-phosphate importer (TC 3.A.1.1.3) family. The complex is composed of two ATP-binding proteins (UgpC), two transmembrane proteins (UgpA and UgpE) and a solute-binding protein (UgpB).

It localises to the cell inner membrane. The catalysed reaction is sn-glycerol 3-phosphate(out) + ATP + H2O = sn-glycerol 3-phosphate(in) + ADP + phosphate + H(+). Functionally, part of the ABC transporter complex UgpBAEC involved in sn-glycerol-3-phosphate (G3P) import. Responsible for energy coupling to the transport system. In Rhizobium etli (strain ATCC 51251 / DSM 11541 / JCM 21823 / NBRC 15573 / CFN 42), this protein is sn-glycerol-3-phosphate import ATP-binding protein UgpC 3.